Reading from the N-terminus, the 188-residue chain is Elongation factor P (188 aa).

Belongs to the elongation factor P family.

It is found in the cytoplasm. It participates in protein biosynthesis; polypeptide chain elongation. Its function is as follows. Involved in peptide bond synthesis. Stimulates efficient translation and peptide-bond synthesis on native or reconstituted 70S ribosomes in vitro. Probably functions indirectly by altering the affinity of the ribosome for aminoacyl-tRNA, thus increasing their reactivity as acceptors for peptidyl transferase. The chain is Elongation factor P from Acidiphilium cryptum (strain JF-5).